The primary structure comprises 288 residues: SUR7 family protein pun1 (288 aa).

The Cytoplasmic segment spans residues Met1–Leu11. A helical membrane pass occupies residues Phe12–Ile32. N-linked (GlcNAc...) asparagine glycans are attached at residues Asn33, Asn50, Asn59, Asn66, Asn122, Asn153, and Asn160. Residues Asn33 to Tyr185 lie on the Extracellular side of the membrane. A helical transmembrane segment spans residues Ile186–Phe206. Topologically, residues Phe207–Leu210 are cytoplasmic. A helical transmembrane segment spans residues Phe211–Val231. The Extracellular portion of the chain corresponds to Ala232–Lys257. A helical transmembrane segment spans residues Ile258 to Ile278. At Gly279–Leu288 the chain is on the cytoplasmic side.

This sequence belongs to the SUR7 family.

Its subcellular location is the golgi apparatus membrane. The protein resides in the cell membrane. It localises to the cell tip. Contributes to the wild-type cellular response to nitrogen stress through signaling pathways that regulate the expression of genes involved in amino acid biosynthesis. Required for wild-type filamentous growth, cell growth, and cell-cell adhesion. The sequence is that of SUR7 family protein pun1 (pun1) from Schizosaccharomyces pombe (strain 972 / ATCC 24843) (Fission yeast).